The chain runs to 391 residues: F-box only protein 5 (391 aa).

Positions 198–245 constitute an F-box domain; that stretch reads AELFHRDFKHLLTKILRHLSAMDLINVISVSTTWRKILQKDNSAYNSY. The segment at 318–366 adopts a ZBR-type zinc-finger fold; it reads CLKVCVDCSSPAKYDPYLHRATCTRESCKFDFCTLCSCKYHGSKCCQTS. Residues Cys-322, Cys-325, Cys-340, Cys-345, Cys-350, Cys-353, His-358, and Cys-363 each contribute to the Zn(2+) site. The tract at residues 365 to 391 is disordered; the sequence is TSKPRSYRVPSEPLPGSKKSKQNLRRL. Residues 382–391 show a composition bias toward basic residues; the sequence is KKSKQNLRRL.

Part of a SCF (SKP1-cullin-F-box) protein ligase complex. Interacts with btrc. Interacts with skp1. Interacts with cdc20. Interacts with pin1; stabilizes fbxo5 by preventing its association with btrc in an isomerization-dependent pathway; this interaction is present during G2 phase and prevents fbxo5 degradation. Interacts with plk1. Post-translationally, proteolysed; proteolysis is induced by both cyclin B-cdk1 and cyclin A-cdk1/2 complex through probable phosphorylation. Proteolysis is inhibited by pin1 during G2.

The protein resides in the nucleus. The protein localises to the cytoplasm. It localises to the cytoskeleton. It is found in the spindle. Its subcellular location is the microtubule organizing center. The protein resides in the centrosome. It participates in protein modification; protein ubiquitination. In terms of biological role, regulates progression through early mitosis by inhibiting the anaphase promoting complex/cyclosome (APC). Binds to the APC activators cdc20 to prevent APC activation. Can also bind directly to the APC to inhibit substrate-binding. Required to arrest unfertilized eggs at metaphase of meiosis II, by preventing their release from metaphase of meiosis II, through inhibition of APC-dependent cyclin B destruction leading to stabilization of cyclin B-cdk1 complex activity. This is F-box only protein 5 from Xenopus tropicalis (Western clawed frog).